The chain runs to 101 residues: Putative pterin-4-alpha-carbinolamine dehydratase (101 aa).

The protein belongs to the pterin-4-alpha-carbinolamine dehydratase family.

The catalysed reaction is (4aS,6R)-4a-hydroxy-L-erythro-5,6,7,8-tetrahydrobiopterin = (6R)-L-erythro-6,7-dihydrobiopterin + H2O. This Rhodopseudomonas palustris (strain BisA53) protein is Putative pterin-4-alpha-carbinolamine dehydratase.